Reading from the N-terminus, the 430-residue chain is Histidine--tRNA ligase, chloroplastic (430 aa).

It belongs to the class-II aminoacyl-tRNA synthetase family.

Its subcellular location is the plastid. It localises to the chloroplast. The enzyme catalyses tRNA(His) + L-histidine + ATP = L-histidyl-tRNA(His) + AMP + diphosphate + H(+). This chain is Histidine--tRNA ligase, chloroplastic, found in Pyropia yezoensis (Susabi-nori).